Here is a 479-residue protein sequence, read N- to C-terminus: Ribosomal RNA small subunit methyltransferase F (479 aa).

Residues 128-134, E152, D179, and D197 contribute to the S-adenosyl-L-methionine site; that span reads ASAPGSK. Catalysis depends on C250, which acts as the Nucleophile.

Belongs to the class I-like SAM-binding methyltransferase superfamily. RsmB/NOP family.

Its subcellular location is the cytoplasm. The catalysed reaction is cytidine(1407) in 16S rRNA + S-adenosyl-L-methionine = 5-methylcytidine(1407) in 16S rRNA + S-adenosyl-L-homocysteine + H(+). Specifically methylates the cytosine at position 1407 (m5C1407) of 16S rRNA. This is Ribosomal RNA small subunit methyltransferase F from Shewanella halifaxensis (strain HAW-EB4).